The sequence spans 419 residues: MAGDFSNRAPWKRSACDRCRAQKLRCHRDSGHSTDACLRCLKSGIECVTSKARPTGRPPSRQVQPTVVVEQGDTSSSSHTTDSSPSAGGTDMSNMMNFEYDLSLDNILDSIGMQHSDFIVNDNILVDISPLSSSQSTSQHSVAQAQAQTVDPSTIQSTASYQFNTLPSTSSMDSALPMRSDHVELLLSRLHSKLSAQLYSIRSSPWDVKGTLNLSLAHQGIGQDFENCESHPLVQVSQACTELERLLSGLRAPASAEHTPSTFSYTPAVPPRLRITQLLIALSCYIQIVSIYGIIFSKVFDYLLSTSKTSVGSYQSSPLTLYIGGLPIPPNETLSGNLLVHLIEHQLHQIEQLMGLPEHYRVSSRAKDTKDGELGLFGSQHSQSLLNAAIQLGEDRDGNHDDIRCVRALKIVMRQIKDF.

The zn(2)-C6 fungal-type DNA-binding region spans 16-47; the sequence is CDRCRAQKLRCHRDSGHSTDACLRCLKSGIEC. Residues 50-92 form a disordered region; the sequence is SKARPTGRPPSRQVQPTVVVEQGDTSSSSHTTDSSPSAGGTDM. The span at 74–86 shows a compositional bias: low complexity; sequence TSSSSHTTDSSPS.

It localises to the nucleus. In terms of biological role, transcription factor that regulates the expression of the gene cluster that mediates the biosynthesis of fusaric acid, a mycotoxin with low to moderate toxicity to animals and humans, but with high phytotoxic properties. In Gibberella fujikuroi (strain CBS 195.34 / IMI 58289 / NRRL A-6831) (Bakanae and foot rot disease fungus), this protein is Fusaric acid cluster transcription factor FUB10.